Here is a 935-residue protein sequence, read N- to C-terminus: MDIGLITNKEDDEENDLSIKSPYSTTKNQNNNKTKDEIIKKDFISNINYSNNNIYSNIYNNIFNNIFNKFNTNNNNNNTTNNNPNNNNNNNNNNPNYNNNNPNYNNNDNNPNNNNNNNNNNNNNNNNNNNNKNYINNKNYINNNNINYINNNNNNNNNNNNNNNNNNNNNNNNNNNNNNNNNTSNNTSFNKQNNYNNNNYNSNSSSRSNNSNNNNNNNNNDDNIYNNGKNYIPNNGIINNHSNNDINNSYNNNNNIQNYYYKKNNNENKKKNNDNENNNYPNFNNNNNYNNYNNNDNIINNNNNNNNNNINNNINNNINNINNINNNNNKIIRQHPYINNENQQKHQKKIQHQENSNFEQLEKPEQLSHNSESSKTTILNENNSYLKNDKIMLSPTQQQQQQQQQQQQQQQQQYLISSSKYGYNNQNNNNNNGNSNQESILEKKKKIRKTRYFENEYQKLHESNIKNINNNNSNNNNNNNNNNNNNNNNNIYNEEELSLNTSSPIQSQSQYQVIYPHQQCPSSPTSSSTSTSSTTSSSSSSSSSSSSSSSSSTSSTSTITTTTTITTQSTFQNQIQLPQPSPYNQFTATFINSSNGFIKKKEKDAKKQIKVVTTLLIQHLISNNVTKFNVRLIESLLNVDFFKLKEILDIMECSKLVRNDKCNNYVWLGLDNPEFLNFALSTFHSKINFITKNSEFFCDNCKLNSENGVILNSPILQFSNVSPTLLSPSSSTSSETTTSTSTTTNNTSTTTISPSSNVSVNNSYSLVNMSDLYNGGSGGGSSGGGGSGGGVNNNNNVQNNINSGRKFRYKETELSTTVSQFLKLLLSDKCLTIHDVCFNFNPNIEKTHDNYISLRNSAKIKRCYDIANVFEAINLVQKSKSVEETRTQNYKWIGTTVLTNEYCQNNCPYILQENYIQQQQQLQLQQQQNQPKPPR.

Disordered stretches follow at residues 1–32 (MDIG…QNNN), 74–228 (NNNN…YNNG), 265–287 (NNEN…NNNN), 342–376 (NQQK…SSKT), 394–414 (SPTQ…QQQY), 466–491 (KNIN…NNNI), 516–559 (PHQQ…TSTI), 727–755 (SPSS…ISPS), and 778–799 (GGGS…NVQN). Residues 74 to 227 (NNNNNTTNNN…NNNDDNIYNN (154 aa)) are compositionally biased toward low complexity. Residues 262–331 (KKNNNENKKK…NNINNNNNKI (70 aa)) are a coiled coil. Over residues 265–274 (NNENKKKNND) the composition is skewed to basic and acidic residues. Positions 275-287 (NENNNYPNFNNNN) are enriched in low complexity. Residues 367–376 (LSHNSESSKT) are compositionally biased toward polar residues. Positions 397 to 414 (QQQQQQQQQQQQQQQQQY) are enriched in low complexity. Residues 522-559 (SSPTSSSTSTSSTTSSSSSSSSSSSSSSSSSTSSTSTI) are compositionally biased toward low complexity. Residues 778–791 (GGGSSGGGGSGGGV) show a composition bias toward gly residues.

This is an uncharacterized protein from Dictyostelium discoideum (Social amoeba).